Reading from the N-terminus, the 279-residue chain is Pleckstrin homology domain-containing family F member 1 (279 aa).

The region spanning 35 to 131 (VLLGEGVLTK…WISHIEECVR (97 aa)) is the PH domain. An FYVE-type zinc finger spans residues 152–212 (DKATDICMRC…VCSLCYRELA (61 aa)). The Zn(2+) site is built by Cys158, Cys161, Cys175, Cys178, Cys183, Cys186, Cys204, and Cys207. The interval 218–264 (EEAEEQGAGSPGQPAHLARPICGASSGDDDDSDEDKEGSRDGDWPSS) is disordered. Over residues 244 to 253 (GDDDDSDEDK) the composition is skewed to acidic residues.

As to expression, highly expressed in heart and skeletal muscle. Weakly expressed in brain, thymus, spleen, kidney, liver, small intestine, placenta and lung.

Its subcellular location is the nucleus. It is found in the cytoplasm. The protein resides in the perinuclear region. The protein localises to the lysosome. Its function is as follows. May induce apoptosis through the lysosomal-mitochondrial pathway. Translocates to the lysosome initiating the permeabilization of lysosomal membrane (LMP) and resulting in the release of CTSD and CTSL to the cytoplasm. Triggers the caspase-independent apoptosis by altering mitochondrial membrane permeabilization (MMP) resulting in the release of PDCD8. The polypeptide is Pleckstrin homology domain-containing family F member 1 (PLEKHF1) (Homo sapiens (Human)).